A 334-amino-acid polypeptide reads, in one-letter code: WD repeat-containing protein 54 (334 aa).

3 WD repeats span residues 116–155 (SSVQ…PNIV), 162–206 (GHQT…TLLT), and 250–289 (AHAR…ESGS).

As to quaternary structure, homodimer and homotrimer; forms tight forms of dimers and trimers. Interacts with IZUMO1 and IZUMO1R/JUNO. Cross-linked to tightly form both dimers and trimers by TGM2. Cross-linking enhances the activation of EGF receptor-mediated signaling pathway. Cross-linking is inhibited by EGF. In terms of processing, ubiquitinated. EGF increases ubiquitination.

It is found in the vesicle. It localises to the cytoplasm. The protein resides in the cell membrane. Plays a role in the adhesion and fusion of the sperm-oocyte membrane through its interactions with IZUMO1 and IZUMO1R/JUNO. When cross-linked to form dimers and trimers, it has a regulatory effect on ERK signaling pathway activity in response to EGF stimulation. Colocalizes with the EGF receptor in WDR54-specific vesicle where it sustains the internalization and controls the degradation of the EGF receptor after EGF stimulation. This chain is WD repeat-containing protein 54, found in Mus musculus (Mouse).